A 932-amino-acid polypeptide reads, in one-letter code: MSDFRIIEEKWQKAWEKDRIFESDPNEKEKFFLTIPYPYLNGNLHAGHTRTFTIGDAFARYMRMKGYNVLFPLGFHVTGTPIIGLAELIAKRDERTIEVYTKYHDVPLEDLLQLTTPEKIVEYFSREALQALKSIGYSIDWRRVFTTTDEEYQRFIEWQYWKLKELGLIVKGTHPVRYCPHDQNPVEDHDLLAGEEATIVEFTVIKFRLEDGDLIFPCATLRPETVFGVTNIWVKPTTYVIAEVDGEKWFVSKEAYEKLTYTEKKVRLLEEVDASQFFGKYVIVPLVNRKVPILPAEFVDTDNATGVVMSVPAHAPFDLAAIEDLKRDEETLAKYGIDKSVVESIKPIVLIKTDIEGVPAEKLIRELGVKSQKDKELLDKATKTLYKKEYHTGIMLDNTMNYAGMKVSEAKERVHEDLVKLGLGDVFYEFSEKPVICRCGTKCVVKVVRDQWFLNYSNREWKEKVLNHLEKMRIIPDYYKEEFRNKIEWLRDKACARRKGLGTRIPWDKEWLIESLSDSTIYMAYYILAKYINAGLLKAENMTPEFLDYVLLGKGEVGKVAEASKLSVELIQQIRDDFEYWYPVDLRSSGKDLVANHLLFYLFHHVAIFPPDKWPRAIAVNGYVSLEGKKMSKSKGPLLTMKRAVQQYGADVTRLYILHAAEYDSDADWKSREVEGLANHLRRFYNLVKENYLKEVGELTTLDRWLVSRMQRAIKEVREAMDNLQTRRAVNAAFFELMNDVRWYLRRGGENLAIILDDWIKLLAPFAPHICEELWHLKHDSYVSLESYPEYDETRVDEEAERIEEYLRNLVEDIQEIKKFVSDAKEVYIAPAEDWKVKAAKVVAESGDVGEAMKQLMQDEELRKLGKEVSNFVKKIFKDRKKLMLVKEWEVLQQNLKFIENETGLKVILDTQRVPEEKRRQAVPGKPAIYVA.

The short motif at 38 to 48 is the 'HIGH' region element; that stretch reads PYLNGNLHAGH. Positions 630 to 634 match the 'KMSKS' region motif; that stretch reads KMSKS. Lysine 633 contacts ATP.

It belongs to the class-I aminoacyl-tRNA synthetase family.

The protein resides in the cytoplasm. It carries out the reaction tRNA(Leu) + L-leucine + ATP = L-leucyl-tRNA(Leu) + AMP + diphosphate. This is Leucine--tRNA ligase from Archaeoglobus fulgidus (strain ATCC 49558 / DSM 4304 / JCM 9628 / NBRC 100126 / VC-16).